Here is a 1241-residue protein sequence, read N- to C-terminus: ATP-dependent helicase/nuclease subunit A (1241 aa).

The UvrD-like helicase ATP-binding domain occupies 12–485; that stretch reads SQWTDDQWKA…IDLAKNFRSR (474 aa). 33–40 is an ATP binding site; it reads AAAGSGKT. A UvrD-like helicase C-terminal domain is found at 505 to 805; the sequence is GEIDYDADAE…RIMTIHKSKG (301 aa).

This sequence belongs to the helicase family. AddA subfamily. As to quaternary structure, heterodimer of AddA and AddB/RexB. Requires Mg(2+) as cofactor.

It catalyses the reaction Couples ATP hydrolysis with the unwinding of duplex DNA by translocating in the 3'-5' direction.. It carries out the reaction ATP + H2O = ADP + phosphate + H(+). The heterodimer acts as both an ATP-dependent DNA helicase and an ATP-dependent, dual-direction single-stranded exonuclease. Recognizes the chi site generating a DNA molecule suitable for the initiation of homologous recombination. The AddA nuclease domain is required for chi fragment generation; this subunit has the helicase and 3' -&gt; 5' nuclease activities. This chain is ATP-dependent helicase/nuclease subunit A, found in Bacillus mycoides (strain KBAB4) (Bacillus weihenstephanensis).